A 76-amino-acid polypeptide reads, in one-letter code: Neuromacin-like protein (76 aa).

4 disulfide bridges follow: Cys-18–Cys-25, Cys-40–Cys-44, Cys-54–Cys-61, and Cys-72–Cys-74.

The protein belongs to the macin family.

It localises to the secreted. The protein is Neuromacin-like protein of Aplysia californica (California sea hare).